The chain runs to 432 residues: Amino-acid acetyltransferase (432 aa).

An N-acetyltransferase domain is found at 286-425 (EVVREASIED…ASLYNYQRNS (140 aa)).

The protein belongs to the acetyltransferase family. ArgA subfamily.

It is found in the cytoplasm. The catalysed reaction is L-glutamate + acetyl-CoA = N-acetyl-L-glutamate + CoA + H(+). It participates in amino-acid biosynthesis; L-arginine biosynthesis; N(2)-acetyl-L-ornithine from L-glutamate: step 1/4. In Pseudomonas putida (strain GB-1), this protein is Amino-acid acetyltransferase.